The primary structure comprises 101 residues: MYLGISGRSPYGSSVAVACQLPNINISGQIYLLLPPSEYINIGFNTRQWQYHCHWRPKFTCPKGKEAVAVPLPLKFICPKGTSCQLPIFIYSEVYLYASEY.

The protein resides in the plastid. The protein localises to the chloroplast. This is an uncharacterized protein from Chlamydomonas reinhardtii (Chlamydomonas smithii).